We begin with the raw amino-acid sequence, 1340 residues long: MGNVEIPNWLKALPLAPVFRPTDTEFADPIAYISKIEKEASAFGICKIIPPLPKPSKKYVFYNLNKSLLKCPELVSDVDISKVCKEDRAVFTTRQQELGQTVKKNKGEKGKSNSQRSGVKQVWQSGGVYTLDQFEAKSKAFYKTQLGTVKELAPVVIEALFWKAALEKPIYIEYANDVPGSAFGEPEDHFRHFRQRKRRGRGFYQRKTENNDPSGKNGEKSSPEVEKAPLASTSLSSQDSSKQKNMDIVDEMEGTAGWKLSNSSWNLQMIARSPGSVTRFMPDDIPGVTSPMVYIGMLFSWFAWHVEDHELHSMNYLHTGSPKTWYAVPCDYALDFEEVIRKNSYGRNIDQLAALTQLGEKTTLVSPEMIVASGIPCCRLVQNPGEFVVTFPRSYHVGFSHGFNCGEAANFGTPQWLNVAKEAAVRRAAMNYLPMLSHQQLLYLLTMSFVSRVPRSLLPGGRSSRLRDRQREEREFLVKRAFVEDILNENKNLSVLLREPGSRLVMWDPDLLPRHSALALAAAGVAGASAVSPPAVAKKELEEGHSELQNKEKTSLLEELSLFMEKLNDVYYDDDDGLLNDFQVDTGTLPCVACGVLGFPFMSVVQPSEKALKDLSERQGETDAQEIMTLSSEKSDCEWKTSSRYIRPRIFCLEHTIELQRLLQSRGGLKFLVICHKDFQKFKAHAAIVAEEVKVPFSYDDVLLESASQEELSLIDLAIEDEEKYEHSVDWTSELGINLRYCVKVRKNSPTKKIQHALSLGGLFSDTSQMLDFTTIRWLQRKSRSKAKPSSTSSFTPCEHLEVKADGKLRDNLDSQTGKKEEKIIQYSRKKKLNPKPSAEQVQELATLAKSKDFDKTCKNFSSRSHLDSAIRSEMNSEIGDSGRVIGVSFSINPCSSSFTVGHGQEHPEITVKFGSDLDGNVTNSLSMVNGDSADLTLTSISREQHQGHSMTSNNNGSNSGSHVVASQTILVSTGDNHDGPRKLSGDYVCSDVSVRGIQEAVEMSDQEFGEPRSTVTNIEDEQQSQIVKPTQREAVFGDHEQVEGAEAVSTRENLCSEIILHTEHSSAHVGMEIPDINTASENLVVDMTHDGEPLESSDILSSSNGDEASSNGLQVLNDELSMESEVSSSENTEVIEAPNSMGEAKKKRKIESESETNDNPESSIGFIRSPCEGLRSRGKRKATCETSLKHTETSDEEKKPIAKRLKKTPKACSGSRQQEVPTTTHPNRCYLEGCKMTFESKAKLQTHKRNRCTHEGCGKKFRAHKYLVLHQRVHKDERPFECSWKGCSMTFKWQWARTEHLRLHTGERPYICKVDGCGLSFRFVSDYSRHRRKTMHYVT.

The region spanning 16-57 (APVFRPTDTEFADPIAYISKIEKEASAFGICKIIPPLPKPSK) is the JmjN domain. Positions 195–245 (QRKRRGRGFYQRKTENNDPSGKNGEKSSPEVEKAPLASTSLSSQDSSKQKN) are disordered. The segment covering 217 to 227 (NGEKSSPEVEK) has biased composition (basic and acidic residues). The 167-residue stretch at 262–428 (NSSWNLQMIA…VAKEAAVRRA (167 aa)) folds into the JmjC domain. Positions 305, 307, and 396 each coordinate Fe cation. Residues 818–825 (GKKEEKII) carry the Nuclear localization signal 1 motif. Residues 1092 to 1225 (GEPLESSDIL…SRQQEVPTTT (134 aa)) are disordered. Residues 1099-1115 (DILSSSNGDEASSNGLQ) show a composition bias toward polar residues. A compositionally biased stretch (low complexity) spans 1124 to 1133 (ESEVSSSENT). Over residues 1188-1201 (SLKHTETSDEEKKP) the composition is skewed to basic and acidic residues. The segment covering 1215 to 1225 (GSRQQEVPTTT) has biased composition (polar residues). 4 C2H2-type zinc fingers span residues 1228-1250 (NRCYLEGCKMTFESKAKLQTHKR), 1251-1275 (NRCTHEGCGKKFRAHKYLVLHQRVH), 1281-1305 (FECSWKGCSMTFKWQWARTEHLRLH), and 1311-1337 (YICKVDGCGLSFRFVSDYSRHRRKTMH). Residues Cys-1230, Cys-1235, His-1248, Cys-1253, Cys-1258, His-1265, His-1271, His-1275, Cys-1283, Cys-1288, His-1301, His-1305, Cys-1313, Cys-1318, His-1331, and His-1337 each coordinate Zn(2+). A Nuclear localization signal 2 motif is present at residues 1248–1255 (HKRNRCTH). Residues 1260-1333 (KKFRAHKYLV…FVSDYSRHRR (74 aa)) form a DNA-binding region.

Belongs to the JHDM3 histone demethylase family. In terms of assembly, interacts with BZR2 (via N-terminus). As to expression, expressed at low levels in seedlings, cotyledons and leaves. Detected in inflorescences, stems, roots and siliques but not in shoot apical meristems or root tips. Accumulates in flowers and embryos.

It is found in the nucleus. The enzyme catalyses N(6),N(6),N(6)-trimethyl-L-lysyl(27)-[histone H3] + 2-oxoglutarate + O2 = N(6),N(6)-dimethyl-L-lysyl(27)-[histone H3] + formaldehyde + succinate + CO2. It catalyses the reaction N(6),N(6)-dimethyl-L-lysyl(27)-[histone H3] + 2-oxoglutarate + O2 = N(6)-methyl-L-lysyl(27)-[histone H3] + formaldehyde + succinate + CO2. In terms of biological role, histone demethylase that demethylates 'Lys-27' (H3K27me) of histone H3, thus acting as a positive regulator of gene expression. Demethylates tri-methylated (H3K27me3) and di-methylated (H3K27me2) H3K27me. Inactive on H3K27me1, H3K4me3, H3K9me2 and H3K36me3. Acts as a repressor of the photoperiodic flowering pathway and of FT. May also be active on H3K4me. Binds around the transcription start site of the FT locus. Required for epigenetic reprogramming by resetting the expression of the floral repressor FLC locus, thus aluviating cold-mediated FLC epigenetically silencing occurring during vernalization and preventing inapropriate epigenetic states inheritence. Together with REF6, required for H3K27me3 resetting (especially in constitutive heterochromatin within the pericentromeric regions) and transgenerational inheritance of histone marks, thus acting in safeguarding genome and epigenome integrity during sexual reproduction. The chain is Lysine-specific demethylase ELF6 from Arabidopsis thaliana (Mouse-ear cress).